The primary structure comprises 213 residues: Imidazole glycerol phosphate synthase subunit HisH 1 (213 aa).

The region spanning 3–213 (SVSILDYGVG…LSIIQQFLQI (211 aa)) is the Glutamine amidotransferase type-1 domain. C81 acts as the Nucleophile in catalysis. Active-site residues include H195 and E197.

In terms of assembly, heterodimer of HisH and HisF.

The protein localises to the cytoplasm. It catalyses the reaction 5-[(5-phospho-1-deoxy-D-ribulos-1-ylimino)methylamino]-1-(5-phospho-beta-D-ribosyl)imidazole-4-carboxamide + L-glutamine = D-erythro-1-(imidazol-4-yl)glycerol 3-phosphate + 5-amino-1-(5-phospho-beta-D-ribosyl)imidazole-4-carboxamide + L-glutamate + H(+). The catalysed reaction is L-glutamine + H2O = L-glutamate + NH4(+). The protein operates within amino-acid biosynthesis; L-histidine biosynthesis; L-histidine from 5-phospho-alpha-D-ribose 1-diphosphate: step 5/9. Its function is as follows. IGPS catalyzes the conversion of PRFAR and glutamine to IGP, AICAR and glutamate. The HisH subunit provides the glutamine amidotransferase activity that produces the ammonia necessary to HisF for the synthesis of IGP and AICAR. This is Imidazole glycerol phosphate synthase subunit HisH 1 from Legionella pneumophila (strain Lens).